A 345-amino-acid polypeptide reads, in one-letter code: MKKITVLGAGSWGTALALVLADNHHDVHMWGHRQELIDQIDEKHENHDYLPNVALPASIKATTDMKQALEGTDAIIVAVPTKAIREVLKRANELITSKVPFVHVSKGIEPDTLLRISQMIEQEVPDEKREAVVVLSGPSHAEEVGLRHPTTVTVSSENIEAAQFVQDLFMNNNFRVYTNPDVIGVEIGGALKNIIALAAGITDGLGYGDNAKAALITRGLAEIARLGTQMGGNPLTFAGLTGVGDLIVTCTSVHSRNWRCGNLLGKGYKLEEVLEKMGMVVEGVRTTKGAYQLSKEYKVSMPITEALYHVLFEGKKVDDAVESLMARVKTHEMEDLVNMFENQTK.

Residues S11, W12, H32, R33, and K106 each coordinate NADPH. Positions 106, 137, and 139 each coordinate sn-glycerol 3-phosphate. Position 141 (A141) interacts with NADPH. The sn-glycerol 3-phosphate site is built by K192, D245, S255, R256, and N257. The active-site Proton acceptor is the K192. Residue R256 coordinates NADPH. Positions 280 and 282 each coordinate NADPH.

This sequence belongs to the NAD-dependent glycerol-3-phosphate dehydrogenase family.

Its subcellular location is the cytoplasm. It catalyses the reaction sn-glycerol 3-phosphate + NAD(+) = dihydroxyacetone phosphate + NADH + H(+). The enzyme catalyses sn-glycerol 3-phosphate + NADP(+) = dihydroxyacetone phosphate + NADPH + H(+). It functions in the pathway membrane lipid metabolism; glycerophospholipid metabolism. Its function is as follows. Catalyzes the reduction of the glycolytic intermediate dihydroxyacetone phosphate (DHAP) to sn-glycerol 3-phosphate (G3P), the key precursor for phospholipid synthesis. The polypeptide is Glycerol-3-phosphate dehydrogenase [NAD(P)+] (Bacillus pumilus (strain SAFR-032)).